The following is a 399-amino-acid chain: Zinc finger HIT domain-containing protein 2 (399 aa).

At M1 the chain carries N-acetylmethionine. C7, C10, C22, C25, C30, C34, H38, and C41 together coordinate Zn(2+). An HIT-type zinc finger spans residues 7 to 41; that stretch reads CGFCPAGEALPARYTCPRCNAPYCSLRCYRAHGAC. Disordered regions lie at residues 70–97 and 152–175; these read RLRE…GLSG and AEPE…AEPF. Positions 86 to 96 are enriched in gly residues; that stretch reads LGPGARPGGLS. T161 is subject to Phosphothreonine.

As to quaternary structure, interacts (via HIT-type zinc finger) with RUVBL2 in the presence of ATP or ADP; shows a stronger interaction in the presence of ADP. Low expression in most tissues; highly expressed in testis; particularly in seminiferous tubules.

Functionally, may act as a bridging factor mediating the interaction between the R2TP/Prefoldin-like (R2TP/PFDL) complex and U5 small nuclear ribonucleoprotein (U5 snRNP). Required for the interaction of R2TP complex subunit RPAP3 and prefoldin-like subunit URI1 with U5 snRNP proteins EFTUD2 and PRPF8. May play a role in regulating the composition of the U5 snRNP complex. The polypeptide is Zinc finger HIT domain-containing protein 2 (Znhit2) (Mus musculus (Mouse)).